The sequence spans 133 residues: Ribosome-binding factor A (133 aa).

It belongs to the RbfA family. As to quaternary structure, monomer. Binds 30S ribosomal subunits, but not 50S ribosomal subunits or 70S ribosomes.

The protein resides in the cytoplasm. Functionally, one of several proteins that assist in the late maturation steps of the functional core of the 30S ribosomal subunit. Associates with free 30S ribosomal subunits (but not with 30S subunits that are part of 70S ribosomes or polysomes). Required for efficient processing of 16S rRNA. May interact with the 5'-terminal helix region of 16S rRNA. This Yersinia enterocolitica protein is Ribosome-binding factor A.